Reading from the N-terminus, the 820-residue chain is 1,4-alpha-glucan-branching enzyme, chloroplastic/amyloplastic (820 aa).

The segment covering 1–20 (MLCLTSSSSSAPAPLLPSLA) has biased composition (low complexity). The interval 1–28 (MLCLTSSSSSAPAPLLPSLADRPSPGIA) is disordered. The transit peptide at 1–64 (MLCLTSSSSS…SVPATARKNK (64 aa)) directs the protein to the chloroplast. The (1,4-alpha-D-glucosyl)n site is built by W153 and K188. The active-site Nucleophile is D409. E464 functions as the Proton donor in the catalytic mechanism.

The protein belongs to the glycosyl hydrolase 13 family. GlgB subfamily. Monomer.

It localises to the plastid. The protein resides in the chloroplast. Its subcellular location is the amyloplast. It carries out the reaction Transfers a segment of a (1-&gt;4)-alpha-D-glucan chain to a primary hydroxy group in a similar glucan chain.. The protein operates within glycan biosynthesis; starch biosynthesis. Catalyzes the formation of the alpha-1,6-glucosidic linkages in starch by scission of a 1,4-alpha-linked oligosaccharide from growing alpha-1,4-glucan chains and the subsequent attachment of the oligosaccharide to the alpha-1,6 position. The chain is 1,4-alpha-glucan-branching enzyme, chloroplastic/amyloplastic (SBE1) from Oryza sativa subsp. japonica (Rice).